A 506-amino-acid polypeptide reads, in one-letter code: MEKIQRYLQLKRSQQHDFLYPLIFQEYIYVFAHNRALNRSILSENPGYDNKSSLRIVKRLITRMYQQNHFLISSNDSNQNRFWARNKNLYSEIISEGFAFIVEIPFSLQLISCLERKKNKIIKSQNLRSIHSIFPFLEDNFSHLNFVLDILIPHSVHVEILIQTLRYWVKDVSSLHLLRVFLNQYCSLITSKKVSSSLSKRNQRFFFFLYNSHVCEYESIFVFLRNQSFHLRSTSSGVLLERIYFYIKIERLVNVFVKDFRANLWLVEEPCMHYIRYQGKSILASKGTSLFMNKWKFYLVTSWEWHFLVWFHPRRICINQFSRHSLEIFGYLSNVQTDPSVVRSQILENAFLINNAIRKLDTLVPIIPLIAKLAKEKFCNVLGHPSSKPIWADLSDSNIIDRFGRICRNISHYHSGSSKKKSLYRIKYILRLSCARTLARKHKSTVRVFLKRLGSELLEEFLMSEEDVLFLTFQKTSSALRRVYRSRIWYLDMISINDLANYKSKF.

Belongs to the intron maturase 2 family. MatK subfamily.

Its subcellular location is the plastid. It localises to the chloroplast. Usually encoded in the trnK tRNA gene intron. Probably assists in splicing its own and other chloroplast group II introns. In Ocimum basilicum (Sweet basil), this protein is Maturase K.